Consider the following 186-residue polypeptide: UPF0301 protein LHK_02881 (186 aa).

This sequence belongs to the UPF0301 (AlgH) family.

This chain is UPF0301 protein LHK_02881, found in Laribacter hongkongensis (strain HLHK9).